We begin with the raw amino-acid sequence, 197 residues long: uncharacterized protein (197 aa).

This is an uncharacterized protein from Caenorhabditis elegans.